The following is a 337-amino-acid chain: 5-formaminoimidazole-4-carboxamide-1-(beta)-D-ribofuranosyl 5'-monophosphate synthetase (337 aa).

The 5-amino-1-(5-phospho-beta-D-ribosyl)imidazole-4-carboxamide site is built by histidine 23 and serine 87. Residues 121–328 (MRLLEYAGIP…IAHEIVNAVK (208 aa)) enclose the ATP-grasp domain. ATP is bound by residues 144–191 (PVIV…VPAY) and glutamate 213. Asparagine 233 is a 5-amino-1-(5-phospho-beta-D-ribosyl)imidazole-4-carboxamide binding site. The Mg(2+) site is built by glutamate 272 and glutamate 285.

The protein belongs to the phosphohexose mutase family. Mg(2+) serves as cofactor. Mn(2+) is required as a cofactor.

It catalyses the reaction 5-amino-1-(5-phospho-beta-D-ribosyl)imidazole-4-carboxamide + formate + ATP = 5-formamido-1-(5-phospho-D-ribosyl)imidazole-4-carboxamide + ADP + phosphate. It functions in the pathway purine metabolism; IMP biosynthesis via de novo pathway; 5-formamido-1-(5-phospho-D-ribosyl)imidazole-4-carboxamide from 5-amino-1-(5-phospho-D-ribosyl)imidazole-4-carboxamide (formate route): step 1/1. In terms of biological role, catalyzes the ATP- and formate-dependent formylation of 5-aminoimidazole-4-carboxamide-1-beta-d-ribofuranosyl 5'-monophosphate (AICAR) to 5-formaminoimidazole-4-carboxamide-1-beta-d-ribofuranosyl 5'-monophosphate (FAICAR) in the absence of folates. The polypeptide is 5-formaminoimidazole-4-carboxamide-1-(beta)-D-ribofuranosyl 5'-monophosphate synthetase (Caldivirga maquilingensis (strain ATCC 700844 / DSM 13496 / JCM 10307 / IC-167)).